A 390-amino-acid polypeptide reads, in one-letter code: Tuftelin (390 aa).

Coiled-coil stretches lie at residues 88-126 (DKMIHEKNINQLKSEVQYIQEARNCLQKLREDISSKLDR) and 162-351 (DTHI…IEKQ). Ser-171 carries the phosphoserine modification.

This sequence belongs to the tuftelin family. Interacts with TFIP11. In terms of tissue distribution, present in the extracellular enamel and is mainly associated with the crystal component.

It localises to the secreted. Involved in the structural organization of the epidermis. Involved in the mineralization and structural organization of enamel. This chain is Tuftelin (TUFT1), found in Bos taurus (Bovine).